The chain runs to 652 residues: DNA mismatch repair protein MutL (652 aa).

It belongs to the DNA mismatch repair MutL/HexB family.

Its function is as follows. This protein is involved in the repair of mismatches in DNA. It is required for dam-dependent methyl-directed DNA mismatch repair. May act as a 'molecular matchmaker', a protein that promotes the formation of a stable complex between two or more DNA-binding proteins in an ATP-dependent manner without itself being part of a final effector complex. This is DNA mismatch repair protein MutL from Neorickettsia sennetsu (strain ATCC VR-367 / Miyayama) (Ehrlichia sennetsu).